Reading from the N-terminus, the 450-residue chain is MKYRYLPQTDQDKREMLETLGISSVEELFADIPEEVRFKGALNIPEALSEPDLVKYFTHLANKNVNFSTHVNFLGAGVYQHYTPSTVNHMLLRGEFFTAYTPYQPEISQGELQAIFEFQTMVCELTGMEVANSSMYDGATSLAEAAMMAAGHTGKKRVIVSRAVHPEARGVLKTYAYGQNVELVEVGINSDGVTDTAALEALVDENTAAIIVQYPNFFGNVEDLGAIETIAHGKGALLITSSNPLALGVLEAPGKLGADIVVGDMQPFGIPASFGGPHCGYFATTTKLMRKMPGRIVGQTKDENGKRGFVLTLQAREQHIRREKATSNICSNQALLALAASIAMTALGKQGVQEMAMMNLQKAHYAKNALQAKGLEIVFTSPFFNEFVVKLNKPVAEVNKGLLAAGIIGGYDLGLDYPEFANHTLLAVTELRTKEEIDILAAELEAITRA.

The protein belongs to the GcvP family. N-terminal subunit subfamily. As to quaternary structure, the glycine cleavage system is composed of four proteins: P, T, L and H. In this organism, the P 'protein' is a heterodimer of two subunits.

The catalysed reaction is N(6)-[(R)-lipoyl]-L-lysyl-[glycine-cleavage complex H protein] + glycine + H(+) = N(6)-[(R)-S(8)-aminomethyldihydrolipoyl]-L-lysyl-[glycine-cleavage complex H protein] + CO2. The glycine cleavage system catalyzes the degradation of glycine. The P protein binds the alpha-amino group of glycine through its pyridoxal phosphate cofactor; CO(2) is released and the remaining methylamine moiety is then transferred to the lipoamide cofactor of the H protein. In Brevibacillus brevis (strain 47 / JCM 6285 / NBRC 100599), this protein is Probable glycine dehydrogenase (decarboxylating) subunit 1.